Consider the following 461-residue polypeptide: Phosphatidate cytidylyltransferase 1 (461 aa).

The segment at 1 to 68 is disordered; that stretch reads MLELRHRGGC…PEVPPSSDRT (68 aa). Arg7 is modified (omega-N-methylarginine). A compositionally biased stretch (basic and acidic residues) spans 22-56; sequence REGEAAGGDHETESTSDKETDIDDRYGDLDARGDS. 2 positions are modified to phosphoserine: Ser35 and Ser37. Helical transmembrane passes span 96–116, 149–169, 183–203, 230–250, 279–299, and 357–377; these read MISL…LLVL, FLLC…FATF, HRFI…LSLV, LVIQ…SSVI, GFIG…YVLS, and IALS…ASGF.

Belongs to the CDS family. As to quaternary structure, homodimer. Interacts with FOS; this interaction may enhance catalytic activity. The cofactor is Mg(2+). In terms of tissue distribution, expressed in adult brain, eye, smooth muscle and testis. Highly expressed in the inner segment of the photoreceptor layer of adult retina.

The protein resides in the endoplasmic reticulum membrane. The enzyme catalyses a 1,2-diacyl-sn-glycero-3-phosphate + CTP + H(+) = a CDP-1,2-diacyl-sn-glycerol + diphosphate. It carries out the reaction 1-octadecanoyl-2-(5Z,8Z,11Z,14Z-eicosatetraenoyl)-sn-glycero-3-phosphate + CTP + H(+) = 1-octadecanoyl-2-(5Z,8Z,11Z,14Z-eicosatetraenoyl)-sn-glycero-3-cytidine-5'-diphosphate + diphosphate. The catalysed reaction is 1-octadecanoyl-2-(9Z,12Z-octadecadienoyl)-sn-glycero-3-phosphate + CTP + H(+) = 1-octadecanoyl-2-(9Z,12Z-octadecadienoyl)-sn-glycero-3-cytidine-5'-diphosphate + diphosphate. It catalyses the reaction 1-hexadecanoyl-2-(5Z,8Z,11Z,14Z-eicosatetraenoyl)-sn-glycero-3-phosphate + CTP + H(+) = 1-hexadecanoyl-2-(5Z,8Z,11Z,14Z-eicosatetraenoyl)-sn-glycero-3-cytidine-5'-diphosphate + diphosphate. The enzyme catalyses 1,2-di-(5Z,8Z,11Z,14Z)-eicosatetraenoyl-sn-glycero-3-phosphate + CTP + H(+) = 1,2-di-(5Z,8Z,11Z,14Z-eicosatetraenoyl)-sn-glycero-3-cytidine-5'-diphosphate + diphosphate. It carries out the reaction 1-octadecanoyl-2-(9Z-octadecenoyl)-sn-glycero-3-phosphate + CTP + H(+) = 1-octadecanoyl-2-(9Z-octadecenoyl)-sn-glycero-3-cytidine-5'-diphosphate + diphosphate. The catalysed reaction is 1-octadecanoyl-2-(4Z,7Z,10Z,13Z,16Z,19Z-docosahexaenoyl)-sn-glycero-3-phosphate + CTP + H(+) = 1-octadecanoyl-2-(4Z,7Z,10Z,13Z,16Z,19Z-docosahexaenoyl)-sn-glycero-3-cytidine-5'-diphosphate + diphosphate. It catalyses the reaction 1,2-di-(9Z,12Z-octadecadienoyl)-sn-glycero-3-phosphate + CTP + H(+) = 1,2-di-(9Z,12Z-octadecadienoyl)-sn-glycero-3-cytidine-5'-diphosphate + diphosphate. The enzyme catalyses 1,2-di-(9Z-octadecenoyl)-sn-glycero-3-phosphate + CTP + H(+) = 1,2-di-(9Z-octadecenoyl)-sn-glycero-3-cytidine-5'-diphosphate + diphosphate. It participates in phospholipid metabolism; CDP-diacylglycerol biosynthesis; CDP-diacylglycerol from sn-glycerol 3-phosphate: step 3/3. Functionally, catalyzes the conversion of phosphatidic acid (PA) to CDP-diacylglycerol (CDP-DAG), an essential intermediate in the synthesis of phosphatidylglycerol, cardiolipin and phosphatidylinositol. Exhibits almost no acyl chain preference for PA, showing no discrimination for the sn-1/sn-2 acyl chain composition of PAs. Plays an important role in regulating the growth of lipid droplets which are storage organelles at the center of lipid and energy homeostasis. Positively regulates the differentiation and development of adipocytes. The protein is Phosphatidate cytidylyltransferase 1 of Mus musculus (Mouse).